The following is a 236-amino-acid chain: MRLAVNIDHIATLRNARQETQPDPVTAARLAELSGASGIVCHLREDRRHIKDRDLELLRATVQTKLDLEMAMTKEMKAIAIKTKPDLVTLVPEKRQELTTEGGLDVITRKDDLIPYIDELQQHGIPTSLFIEPTPEAITVATEVGAAFVELHTGKYSLLKSPKEIEAELLRLQDAASLAKKFGLRVVAGHGLNYENTAEIKRIKEIEEVSIGHALIARATLMGMSEAVKEMIRLLQ.

3-amino-2-oxopropyl phosphate is bound at residue asparagine 6. 8–9 contacts 1-deoxy-D-xylulose 5-phosphate; the sequence is DH. Arginine 17 provides a ligand contact to 3-amino-2-oxopropyl phosphate. Catalysis depends on histidine 42, which acts as the Proton acceptor. 1-deoxy-D-xylulose 5-phosphate contacts are provided by arginine 44 and histidine 49. The Proton acceptor role is filled by glutamate 69. Threonine 99 provides a ligand contact to 1-deoxy-D-xylulose 5-phosphate. The active-site Proton donor is histidine 190. Residues glycine 191 and 212–213 each bind 3-amino-2-oxopropyl phosphate; that span reads GH.

Belongs to the PNP synthase family. Homooctamer; tetramer of dimers.

The protein localises to the cytoplasm. It carries out the reaction 3-amino-2-oxopropyl phosphate + 1-deoxy-D-xylulose 5-phosphate = pyridoxine 5'-phosphate + phosphate + 2 H2O + H(+). It participates in cofactor biosynthesis; pyridoxine 5'-phosphate biosynthesis; pyridoxine 5'-phosphate from D-erythrose 4-phosphate: step 5/5. Its function is as follows. Catalyzes the complicated ring closure reaction between the two acyclic compounds 1-deoxy-D-xylulose-5-phosphate (DXP) and 3-amino-2-oxopropyl phosphate (1-amino-acetone-3-phosphate or AAP) to form pyridoxine 5'-phosphate (PNP) and inorganic phosphate. The protein is Pyridoxine 5'-phosphate synthase of Chloroherpeton thalassium (strain ATCC 35110 / GB-78).